A 465-amino-acid chain; its full sequence is Cysteine--tRNA ligase (465 aa).

A Zn(2+)-binding site is contributed by Cys-29. A 'HIGH' region motif is present at residues 31–41 (PTVYNYIHIGN). Cys-209, His-234, and Glu-238 together coordinate Zn(2+). Positions 266–270 (KMSKS) match the 'KMSKS' region motif. Residue Lys-269 coordinates ATP. Ser-270 is subject to Phosphoserine.

Belongs to the class-I aminoacyl-tRNA synthetase family. In terms of assembly, monomer. Zn(2+) serves as cofactor.

Its subcellular location is the cytoplasm. The enzyme catalyses tRNA(Cys) + L-cysteine + ATP = L-cysteinyl-tRNA(Cys) + AMP + diphosphate. This Bacillus cereus (strain B4264) protein is Cysteine--tRNA ligase.